The sequence spans 674 residues: Early transcription factor 70 kDa subunit (674 aa).

In terms of domain architecture, Helicase ATP-binding spans 34–193; it reads ERSLKEKKSV…KDIVELLTNE (160 aa). 45-52 contacts ATP; it reads LFHKMGSG. A DEXH box motif is present at residues 135 to 138; the sequence is YDNY.

Belongs to the helicase family. VETF subfamily. Heterodimer of a 70 kDa and a 82 kDa subunit. Part of the early transcription complex composed of ETF, RAP94, and the DNA-directed RNA polymerase.

It is found in the virion. In terms of biological role, acts with RNA polymerase to initiate transcription from early gene promoters. Is recruited by the RPO-associated protein of 94 kDa (RAP94) to form the early transcription complex, which also contains the core RNA polymerase. ETF heterodimer binds to early gene promoters. The polypeptide is Early transcription factor 70 kDa subunit (VETFS) (Melanoplus sanguinipes entomopoxvirus (MsEPV)).